The primary structure comprises 281 residues: Transcription factor LBX1 (281 aa).

Positions 1–20 (MTSKEDGKAAPGEERRRSPL) are enriched in basic and acidic residues. Residues 1 to 35 (MTSKEDGKAAPGEERRRSPLDHLPPPANSNKPLTP) are disordered. Positions 125–184 (RRKSRTAFTNHQIYELEKRFLYQKYLSPADRDQIAQQLGLTNAQVITWFQNRRAKLKRDL) form a DNA-binding region, homeobox. Residues 214 to 281 (NSEATAGGGG…EEDEEIDVDD (68 aa)) form a disordered region. Residues 253–267 (SPASPLTDQPASSQD) are compositionally biased toward polar residues. A compositionally biased stretch (acidic residues) spans 268-281 (CSEDEEDEEIDVDD).

In terms of assembly, interacts with SKOR1 which acts as a transcriptional corepressor.

The protein localises to the nucleus. Functionally, transcription factor required for the development of GABAergic interneurons in the dorsal horn of the spinal cord and migration and further development of hypaxial muscle precursor cells for limb muscles, diaphragm and hypoglossal cord. This Homo sapiens (Human) protein is Transcription factor LBX1 (LBX1).